A 546-amino-acid chain; its full sequence is Cytochrome P450 monooxygenase gloP (546 aa).

Residues 17 to 37 traverse the membrane as a helical segment; sequence TLSGGILTFLFIVVIAHFVLT. Asn-189, Asn-413, and Asn-416 each carry an N-linked (GlcNAc...) asparagine glycan. Cys-492 serves as a coordination point for heme.

This sequence belongs to the cytochrome P450 family. Requires heme as cofactor.

The protein localises to the membrane. Its pathway is mycotoxin biosynthesis. In terms of biological role, cytochrome P450 monooxygenase; part of the gene cluster that mediates the biosynthesis of pneumocandins, lipohexapeptides of the echinocandin family that prevent fungal cell wall formation by non-competitive inhibition of beta-1,3-glucan synthase. The 10,12-dimethylmyristoyl side chain is synthesized by the reducing polyketide synthase gloL/GLPKS4. The thioesterase gloN/GLHYD exclusively interacts with gloL/GLPKS4 to maintain turnover of the polyketide side chain. The 10R,12S-dimethylmyristic acid is then transferred to the first thiolation domain of the nonribosomal peptide synthetase gloA/GLNRPS4 by the acyl-AMP ligase gloD/GLligase, followed by its acylation to L-ornithine to trigger elongation of the cyclic hexapeptide. L-ornithine, 4R-hydroxyl-L-proline (generated from L-proline by the dioxygenase gloF/GLOXY2), 3S-hydroxyl-L-homotyrosine (generated by gloG/GLHtyB, gloH/GLHtyA, gloI/GLHtyC, gloJ/GLHtyD and hydroxylated at C-3 by the dioxygenase gloM/GLOXY1), 3R-hydroxyl-L-glutamine (generated from L-glutamine probably by the dioxygenase gloE/GLOXY3) and 3S-hydroxyl-L-proline (generated from L-proline by the dioxygenase gloF/GLOXY2 to yield pneumocandin B0), or 3S-hydroxyl-4S-methyl-L-proline (generated from L-leucine by the dioxygenase gloC/GLOXY4 to yield pneumocandin A0) are sequentially added to the growing chain. The last C domain of gloA/GLNRPS4 is proposed to be responsible for cyclization by condensation to form the peptide bond between L-ornithine and 3S-hydroxyl-4S-methyl-L-proline (for pneumocandin A0) or 3S-hydroxyl-L-proline (for pneumocandin B0). Finally, the subsequent C-4 hydroxylation of 3S-hydroxyl-L-homotyrosine and L-ornithine dihydroxylation at C-4 and C-5 are performed by the cytochrome P450 monooxygenases gloP/GLP450-1 and gloO/GLP450-2, respectively. The protein is Cytochrome P450 monooxygenase gloP of Glarea lozoyensis (strain ATCC 20868 / MF5171).